A 288-amino-acid polypeptide reads, in one-letter code: Bifunctional protein MdtA (288 aa).

Residues 129-132, 152-156, 195-198, and K256 contribute to the NADP(+) site; these read TGPV, RKLDK, and TAGA.

As to quaternary structure, homotrimer.

It is found in the cytoplasm. It catalyses the reaction 5,10-methylenetetrahydromethanopterin + NADP(+) = 5,10-methenyl-5,6,7,8-tetrahydromethanopterin + NADPH. The enzyme catalyses (6R)-5,10-methylene-5,6,7,8-tetrahydrofolate + NADP(+) = (6R)-5,10-methenyltetrahydrofolate + NADPH. It participates in one-carbon metabolism; formaldehyde degradation; formate from formaldehyde (H(4)MPT route): step 2/5. Functionally, catalyzes the dehydrogenation of methylene-H(4)MPT. Can also catalyze the reversible dehydrogenation of methylene-H(4)F with 20-fold lower catalytic efficiency. In Methylorubrum extorquens (strain ATCC 14718 / DSM 1338 / JCM 2805 / NCIMB 9133 / AM1) (Methylobacterium extorquens), this protein is Bifunctional protein MdtA.